Here is a 63-residue protein sequence, read N- to C-terminus: Cecropin-1 (63 aa).

Residues 1–21 form the signal peptide; sequence MNFNKVFILVAIVIAIFAGQT. The propeptide occupies 22 to 23; sequence EA. Position 62 is an arginine amide (arginine 62).

It belongs to the cecropin family.

The protein resides in the secreted. Cecropins have lytic and antibacterial activity against several Gram-positive and Gram-negative bacteria. This is Cecropin-1 (CEC1) from Ceratitis capitata (Mediterranean fruit fly).